We begin with the raw amino-acid sequence, 348 residues long: Dihydroorotase (348 aa).

Zn(2+) contacts are provided by histidine 17 and histidine 19. Substrate-binding positions include 19-21 (HLR) and asparagine 45. Lysine 103, histidine 140, and histidine 178 together coordinate Zn(2+). N6-carboxylysine is present on lysine 103. Position 140 (histidine 140) interacts with substrate. A substrate-binding site is contributed by leucine 223. Residue aspartate 251 participates in Zn(2+) binding. Residue aspartate 251 is part of the active site. Substrate is bound by residues histidine 255 and alanine 267.

It belongs to the metallo-dependent hydrolases superfamily. DHOase family. Class II DHOase subfamily. Homodimer. It depends on Zn(2+) as a cofactor.

The catalysed reaction is (S)-dihydroorotate + H2O = N-carbamoyl-L-aspartate + H(+). It participates in pyrimidine metabolism; UMP biosynthesis via de novo pathway; (S)-dihydroorotate from bicarbonate: step 3/3. Functionally, catalyzes the reversible cyclization of carbamoyl aspartate to dihydroorotate. The protein is Dihydroorotase of Yersinia pseudotuberculosis serotype I (strain IP32953).